Here is a 264-residue protein sequence, read N- to C-terminus: Short chain dehydrogenase/reductase nsrJ (264 aa).

NADP(+)-binding residues include I24, D70, N97, and R130. Active-site proton donor residues include S146 and S147. 3 residues coordinate NADP(+): Y161, K165, and T196. The active-site Proton acceptor is the Y161. Catalysis depends on K165, which acts as the Lowers pKa of active site Tyr.

This sequence belongs to the short-chain dehydrogenases/reductases (SDR) family.

Its pathway is secondary metabolite biosynthesis. In terms of biological role, short chain dehydrogenase/reductase; part of the gene cluster that mediates the biosynthesis of the tetrahydroxanthone dimer neosartorin, which exhibits antibacterial activity. The two different monomeric units appear to be synthesized by the same set of enzymes, among which the Baeyer-Villiger monooxygenase nsrF is the key enzyme for the divergence of the biosynthetic routes. The pathway begins with the synthesis of atrochrysone thioester by the polyketide synthase nsrB. The atrochrysone carboxyl ACP thioesterase nsrC then breaks the thioester bond and releases the atrochrysone carboxylic acid from AacuL. Atrochrysone carboxylic acid is decarboxylated by the decarboxylase nsrE, and oxidized by the anthrone oxygenase nsrD to yield emodin. Emodin is then reduced to emodin hydroquinone by the oxidoreductase nsrR. A-ring reduction by the short chain dehydrogenase nsrJ, dehydration by the scytalone dehydratase-like protein nsrI and probable spontaneous re-oxidation, results in overall deoxygenation to chrysophanol. The Baeyer-Villiger monooxygenase nsrF accepts chrysophanol as a substrate to insert one oxygen atom at two different positions to yield the precursors of both monomric units. NsrF is promiscuous/flexible in interacting with the 2 (non methylated and methylated) aromatic rings of chrysophanol, thus diverging the biosynthetic pathway at this point. After the hydrolysis of the lactones, methylesterification by the methyltransferase nsrG yields respectively moniliphenone and 2,2',6'-trihydroxy-4-methyl-6-methoxya-cyldiphenylmethanone. The next steps are the hydroxylation by the FAD-dependent monooxygenase nsrK, followed by isomerization by the monooxygenase nsrQ. The short chain dehydrogenase/reductase nsrO then catalyzes the C-5 ketoreduction to give the xanthone skeleton of blennolide C and 5-acetylblennolide A. The acetyltransferase nsrL has a strict substrate specificity and uses only blennolide A but not blennolide C to yield 5-acetylblennolide A as the single-acetylated product. In the final step of the biosynthesis, the heterodimerization of the 2 xanthones, blennolide C and 5-acetylblennolide A, is catalyzed by the cytochrome P450 monooxygenase nsrP. NsrP can utilize at least three different xanthones as its substrates to perform the dimerization reaction. The polypeptide is Short chain dehydrogenase/reductase nsrJ (Aspergillus novofumigatus (strain IBT 16806)).